The primary structure comprises 817 residues: Alpha-bisabolene synthase (817 aa).

Asp566, Asp570, Asp713, Thr717, and Glu721 together coordinate Mg(2+). Residues 566–570 (DDMYD) carry the DDXXD motif motif.

Belongs to the terpene synthase family. Tpsd subfamily. Mg(2+) serves as cofactor. It depends on Mn(2+) as a cofactor. Requires K(+) as cofactor.

It localises to the cytoplasm. The catalysed reaction is (2E,6E)-farnesyl diphosphate = (E,R)-alpha-bisabolene + diphosphate. Its pathway is terpene metabolism; oleoresin biosynthesis. Its function is as follows. Converts farnesyl diphosphate to alpha-bisabolene. Involved in defensive oleoresin formation in conifers in response to insect attack or other injury. Involved in sesquiterpene (C15) olefins biosynthesis. This is Alpha-bisabolene synthase (ag1) from Abies grandis (Grand fir).